The chain runs to 219 residues: Octanoyltransferase (219 aa).

Positions 31–206 (DEDVDQIWLV…ELVELLGYDQ (176 aa)) constitute a BPL/LPL catalytic domain. Substrate-binding positions include 70–77 (RGGQVTYH), 137–139 (SLG), and 150–152 (GLA). Cys168 (acyl-thioester intermediate) is an active-site residue.

Belongs to the LipB family.

The protein resides in the cytoplasm. It carries out the reaction octanoyl-[ACP] + L-lysyl-[protein] = N(6)-octanoyl-L-lysyl-[protein] + holo-[ACP] + H(+). The protein operates within protein modification; protein lipoylation via endogenous pathway; protein N(6)-(lipoyl)lysine from octanoyl-[acyl-carrier-protein]: step 1/2. Functionally, catalyzes the transfer of endogenously produced octanoic acid from octanoyl-acyl-carrier-protein onto the lipoyl domains of lipoate-dependent enzymes. Lipoyl-ACP can also act as a substrate although octanoyl-ACP is likely to be the physiological substrate. In Vibrio atlanticus (strain LGP32) (Vibrio splendidus (strain Mel32)), this protein is Octanoyltransferase.